Consider the following 155-residue polypeptide: Vasotocin-neurophysin VT 1 (155 aa).

The first 20 residues, Met-1–Ala-20, serve as a signal peptide directing secretion. Cys-21 and Cys-26 are joined by a disulfide. Residue Gly-29 is modified to Glycine amide. Cystine bridges form between Cys-41–Cys-85, Cys-44–Cys-58, Cys-52–Cys-75, Cys-59–Cys-65, Cys-92–Cys-105, Cys-99–Cys-117, and Cys-106–Cys-111.

The protein belongs to the vasopressin/oxytocin family. Seven disulfide bonds are present in neurophysin.

The protein resides in the secreted. In terms of biological role, vasotocin is probably an antidiuretic hormone. This is Vasotocin-neurophysin VT 1 from Oncorhynchus masou (Cherry salmon).